A 488-amino-acid polypeptide reads, in one-letter code: WD repeat-containing protein slp1 (488 aa).

2 disordered regions span residues 1–29 (MEIA…PNSP) and 74–93 (CGSP…FIPS). Over residues 7–17 (SSTISPTFSTP) the composition is skewed to low complexity. 7 WD repeats span residues 178 to 215 (IDDY…VSAL), 219 to 258 (DEST…KLRT), 261 to 298 (GHQA…HQIG), 302 to 341 (GHSS…PKFT), 344 to 386 (NHNA…RVNT), 388 to 429 (DAGS…LTKQ), and 434 to 473 (AHDT…HVKR).

This sequence belongs to the WD repeat CDC20/Fizzy family. As to quaternary structure, interacts with cdc13, mad3 and mes1.

In terms of biological role, required for mad2-dependent spindle checkpoint activation. Promotes ubiquitin-dependent degradation of cdc13 by the anaphase promoting complex/cyclosome (APC/C). This chain is WD repeat-containing protein slp1 (slp1), found in Schizosaccharomyces pombe (strain 972 / ATCC 24843) (Fission yeast).